Consider the following 742-residue polypeptide: Clamp-binding protein CrfC (742 aa).

A clamp-binding consensus region spans residues 41–45 (QLALP). In terms of domain architecture, Dynamin-type G spans 66–402 (SRLEMVLAIV…LWEDSLFAQP (337 aa)). Residues 76–83 (GTMKAGKS) form a G1 motif region. Residues 102–104 (MTA) are G2 motif. The interval 236 to 239 (DTPG) is G3 motif. The segment at 297–300 (NKFD) is G4 motif. The interval 331–334 (FPVS) is G5 motif. The stretch at 440-472 (RAHGLNVACEQLRQNIHQIEESLQLLQLNQAQV) forms a coiled coil.

This sequence belongs to the TRAFAC class dynamin-like GTPase superfamily. Dynamin/Fzo/YdjA family. As to quaternary structure, forms homooligomers. Binds to the beta sliding clamp processivity factor (DnaN) in the presence and absence of DNA, may bind to the clamp itself as homodimers or trimers. Homooligomers may be able to bind more than 1 clamp complex.

The protein localises to the cytoplasm. Important for the colocalization of sister nascent DNA strands after replication fork passage during DNA replication, and for positioning and subsequent partitioning of sister chromosomes. Does not have GTPase activity on its own. The protein is Clamp-binding protein CrfC (crfC) of Escherichia coli (strain K12).